The sequence spans 612 residues: Sulfite reductase [NADPH] hemoprotein beta-component (612 aa).

Residues Met-1–Glu-26 form a disordered region. [4Fe-4S] cluster contacts are provided by Cys-469, Cys-475, Cys-514, and Cys-518. Cys-518 contacts siroheme.

This sequence belongs to the nitrite and sulfite reductase 4Fe-4S domain family. Alpha(8)-beta(8). The alpha component is a flavoprotein, the beta component is a hemoprotein. The cofactor is siroheme. It depends on [4Fe-4S] cluster as a cofactor.

The catalysed reaction is hydrogen sulfide + 3 NADP(+) + 3 H2O = sulfite + 3 NADPH + 4 H(+). It functions in the pathway sulfur metabolism; hydrogen sulfide biosynthesis; hydrogen sulfide from sulfite (NADPH route): step 1/1. Component of the sulfite reductase complex that catalyzes the 6-electron reduction of sulfite to sulfide. This is one of several activities required for the biosynthesis of L-cysteine from sulfate. This chain is Sulfite reductase [NADPH] hemoprotein beta-component, found in Methylorubrum extorquens (strain CM4 / NCIMB 13688) (Methylobacterium extorquens).